Reading from the N-terminus, the 577-residue chain is Aspartate--tRNA(Asp/Asn) ligase (577 aa).

Glu-171 lines the L-aspartate pocket. The tract at residues 195-198 is aspartate; that stretch reads QLFK. Arg-217 is a binding site for L-aspartate. Residues 217–219 and Gln-226 each bind ATP; that span reads RDE. His-444 contacts L-aspartate. Glu-474 lines the ATP pocket. Arg-481 contributes to the L-aspartate binding site. 526-529 provides a ligand contact to ATP; that stretch reads GFDR.

The protein belongs to the class-II aminoacyl-tRNA synthetase family. Type 1 subfamily. In terms of assembly, homodimer.

The protein resides in the cytoplasm. The catalysed reaction is tRNA(Asx) + L-aspartate + ATP = L-aspartyl-tRNA(Asx) + AMP + diphosphate. Its function is as follows. Aspartyl-tRNA synthetase with relaxed tRNA specificity since it is able to aspartylate not only its cognate tRNA(Asp) but also tRNA(Asn). Is 1.7 times more efficient at aminoacylating tRNA(Asp) over tRNA(Asn). Reaction proceeds in two steps: L-aspartate is first activated by ATP to form Asp-AMP and then transferred to the acceptor end of tRNA(Asp/Asn). The protein is Aspartate--tRNA(Asp/Asn) ligase of Helicobacter pylori (strain ATCC 700392 / 26695) (Campylobacter pylori).